The following is a 250-amino-acid chain: Superoxide dismutase 1 copper chaperone (250 aa).

Residues 4–67 (SFEIVFAVPM…AIQSTGKDAI (64 aa)) form the HMA domain. Residues cysteine 15, cysteine 18, cysteine 229, and cysteine 231 each contribute to the Cu cation site.

The protein belongs to the CCS1 family. Cu(2+) is required as a cofactor.

Its subcellular location is the cytoplasm. Functionally, copper chaperone for superoxide dismutase 1 (SOD1). Binds copper ions and delivers them specifically to SOD1. The chain is Superoxide dismutase 1 copper chaperone (CCS1) from Debaryomyces hansenii (strain ATCC 36239 / CBS 767 / BCRC 21394 / JCM 1990 / NBRC 0083 / IGC 2968) (Yeast).